The chain runs to 464 residues: ATP synthase subunit beta (464 aa).

154–161 (GGAGVGKT) lines the ATP pocket.

The protein belongs to the ATPase alpha/beta chains family. In terms of assembly, F-type ATPases have 2 components, CF(1) - the catalytic core - and CF(0) - the membrane proton channel. CF(1) has five subunits: alpha(3), beta(3), gamma(1), delta(1), epsilon(1). CF(0) has three main subunits: a(1), b(2) and c(9-12). The alpha and beta chains form an alternating ring which encloses part of the gamma chain. CF(1) is attached to CF(0) by a central stalk formed by the gamma and epsilon chains, while a peripheral stalk is formed by the delta and b chains.

The protein resides in the cell membrane. The catalysed reaction is ATP + H2O + 4 H(+)(in) = ADP + phosphate + 5 H(+)(out). Produces ATP from ADP in the presence of a proton gradient across the membrane. The catalytic sites are hosted primarily by the beta subunits. The polypeptide is ATP synthase subunit beta (Mycoplasmopsis synoviae (strain 53) (Mycoplasma synoviae)).